The following is a 156-amino-acid chain: Ribonuclease H (156 aa).

The RNase H type-1 domain maps to Met1–Asn142. Positions 10, 48, 70, and 134 each coordinate Mg(2+).

This sequence belongs to the RNase H family. As to quaternary structure, monomer. Mg(2+) is required as a cofactor.

Its subcellular location is the cytoplasm. The enzyme catalyses Endonucleolytic cleavage to 5'-phosphomonoester.. Functionally, endonuclease that specifically degrades the RNA of RNA-DNA hybrids. This Photorhabdus luminescens (Xenorhabdus luminescens) protein is Ribonuclease H.